The primary structure comprises 460 residues: Trigger factor (460 aa).

The 80-residue stretch at 166 to 245 (DDFLTIDITA…VKAVKERELP (80 aa)) folds into the PPIase FKBP-type domain. The segment at 434 to 460 (AAEEAAAGEANEEADVVASDDPAAVKF) is disordered. Residues 449–460 (VVASDDPAAVKF) are compositionally biased toward low complexity.

The protein belongs to the FKBP-type PPIase family. Tig subfamily.

It is found in the cytoplasm. It catalyses the reaction [protein]-peptidylproline (omega=180) = [protein]-peptidylproline (omega=0). Its function is as follows. Involved in protein export. Acts as a chaperone by maintaining the newly synthesized protein in an open conformation. Functions as a peptidyl-prolyl cis-trans isomerase. The sequence is that of Trigger factor from Paenarthrobacter aurescens (strain TC1).